Here is a 472-residue protein sequence, read N- to C-terminus: Methanethiol oxidase (472 aa).

It belongs to the selenium-binding protein family.

Its subcellular location is the nucleus. It localises to the cytoplasm. It is found in the cytosol. The protein resides in the membrane. It carries out the reaction methanethiol + O2 + H2O = hydrogen sulfide + formaldehyde + H2O2 + H(+). It functions in the pathway organosulfur degradation. Functionally, catalyzes the oxidation of methanethiol, an organosulfur compound known to be produced in substantial amounts by gut bacteria. Selenium-binding protein which may be involved in the sensing of reactive xenobiotics in the cytoplasm. May be involved in intra-Golgi protein transport. The chain is Methanethiol oxidase (selenbp1-b) from Xenopus laevis (African clawed frog).